The chain runs to 91 residues: RNA-binding protein Hfq (91 aa).

A Sm domain is found at 9–68; sequence DPFLNALRRERVPVSVYLVNGIKLQGTIESFDQFVVLLRNTVSQMVYKHAISTVVPARNV.

Belongs to the Hfq family. As to quaternary structure, homohexamer.

Functionally, RNA chaperone that binds small regulatory RNA (sRNAs) and mRNAs to facilitate mRNA translational regulation in response to envelope stress, environmental stress and changes in metabolite concentrations. Also binds with high specificity to tRNAs. The sequence is that of RNA-binding protein Hfq from Stenotrophomonas maltophilia (strain K279a).